The primary structure comprises 153 residues: Ribosome maturation factor RimP (153 aa).

This sequence belongs to the RimP family.

It localises to the cytoplasm. In terms of biological role, required for maturation of 30S ribosomal subunits. This is Ribosome maturation factor RimP from Synechococcus elongatus (strain ATCC 33912 / PCC 7942 / FACHB-805) (Anacystis nidulans R2).